We begin with the raw amino-acid sequence, 388 residues long: Diacylglycerol O-acyltransferase 2 (388 aa).

Residues 1 to 69 lie on the Cytoplasmic side of the membrane; that stretch reads MKTLIAAYSG…NRSKVEKQLQ (69 aa). The helical transmembrane segment at 70-88 threads the bilayer; it reads VISVLQWVLSFLVLGVACS. Topologically, residues 89 to 92 are lumenal; sequence VILM. Residues 93–112 form a helical membrane-spanning segment; that stretch reads YTFCTDCWLIAVLYFTWLAF. Over 113-388 the chain is Cytoplasmic; it reads DWNTPKKGGR…LPETEVLEVN (276 aa).

Belongs to the diacylglycerol acyltransferase family. As to quaternary structure, forms multimeric complexes consisting of several DGAT2 subunits. Interacts with SLC27A1 and this interaction is enhanced in the presence of ZFYVE1. As to expression, predominantly expressed in liver. Also expressed in testis.

The protein localises to the endoplasmic reticulum membrane. Its subcellular location is the lipid droplet. The protein resides in the cytoplasm. It is found in the perinuclear region. It carries out the reaction an acyl-CoA + a 1,2-diacyl-sn-glycerol = a triacyl-sn-glycerol + CoA. It catalyses the reaction all-trans-retinol + an acyl-CoA = an all-trans-retinyl ester + CoA. The enzyme catalyses 1,2-di-(9Z-octadecenoyl)-sn-glycerol + hexadecanoyl-CoA = 1,2-di-(9Z)-octadecenoyl-3-hexadecanoyl-sn-glycerol + CoA. The catalysed reaction is 1,2-di-(9Z-octadecenoyl)-sn-glycerol + (9Z)-octadecenoyl-CoA = 1,2,3-tri-(9Z-octadecenoyl)-glycerol + CoA. It carries out the reaction 1,3-di-(9Z-octadecenoyl)-glycerol + (9Z)-octadecenoyl-CoA = 1,2,3-tri-(9Z-octadecenoyl)-glycerol + CoA. It catalyses the reaction 2,3-di-(9Z)-octadecenoyl-sn-glycerol + (9Z)-octadecenoyl-CoA = 1,2,3-tri-(9Z-octadecenoyl)-glycerol + CoA. The enzyme catalyses 2-(9Z-octadecenoyl)-glycerol + hexadecanoyl-CoA = 1-hexadecanoyl-2-(9Z-octadecenoyl)-sn-glycerol + CoA. The catalysed reaction is 2-(9Z-octadecenoyl)-glycerol + (9Z)-octadecenoyl-CoA = 1,2-di-(9Z-octadecenoyl)-sn-glycerol + CoA. It carries out the reaction all-trans-retinol + hexadecanoyl-CoA = all-trans-retinyl hexadecanoate + CoA. It catalyses the reaction 1-O-(9Z-octadecenyl)-glycerol + (9Z)-octadecenoyl-CoA = 1-O-(9Z-octadecyl)-3-(9Z-octadecenoyl)-glycerol + CoA. The enzyme catalyses 1-(9Z-octadecenoyl)-glycerol + (9Z)-octadecenoyl-CoA = 1,2-di-(9Z-octadecenoyl)-glycerol + CoA. The protein operates within glycerolipid metabolism; triacylglycerol biosynthesis. Inhibited by niacin. Its function is as follows. Essential acyltransferase that catalyzes the terminal and only committed step in triacylglycerol synthesis by using diacylglycerol and fatty acyl CoA as substrates. Required for synthesis and storage of intracellular triglycerides. Probably plays a central role in cytosolic lipid accumulation. In liver, is primarily responsible for incorporating endogenously synthesized fatty acids into triglycerides. Also functions as an acyl-CoA retinol acyltransferase (ARAT). Also able to use 1-monoalkylglycerol (1-MAkG) as an acyl acceptor for the synthesis of monoalkyl-monoacylglycerol (MAMAG). This is Diacylglycerol O-acyltransferase 2 from Mus musculus (Mouse).